Here is a 159-residue protein sequence, read N- to C-terminus: uncharacterized protein (159 aa).

Transmembrane regions (helical) follow at residues 22–42 (LFSS…SFTI), 45–65 (PIEY…LLTL), 80–100 (IWVS…SLSL), and 104–124 (FPSL…CLAF).

It localises to the membrane. This is an uncharacterized protein from Schizosaccharomyces pombe (strain 972 / ATCC 24843) (Fission yeast).